A 424-amino-acid chain; its full sequence is UDP-N-acetylglucosamine 1-carboxyvinyltransferase (424 aa).

A phosphoenolpyruvate-binding site is contributed by 22–23; it reads KN. Arg-98 is a UDP-N-acetyl-alpha-D-glucosamine binding site. Residue Cys-122 is the Proton donor of the active site. At Cys-122 the chain carries 2-(S-cysteinyl)pyruvic acid O-phosphothioketal. Residues 127-131, Asp-312, and Ile-334 each bind UDP-N-acetyl-alpha-D-glucosamine; that span reads RPVDQ.

This sequence belongs to the EPSP synthase family. MurA subfamily.

The protein localises to the cytoplasm. The catalysed reaction is phosphoenolpyruvate + UDP-N-acetyl-alpha-D-glucosamine = UDP-N-acetyl-3-O-(1-carboxyvinyl)-alpha-D-glucosamine + phosphate. It functions in the pathway cell wall biogenesis; peptidoglycan biosynthesis. In terms of biological role, cell wall formation. Adds enolpyruvyl to UDP-N-acetylglucosamine. In Xanthomonas axonopodis pv. citri (strain 306), this protein is UDP-N-acetylglucosamine 1-carboxyvinyltransferase.